The sequence spans 166 residues: Urease accessory protein UreE (166 aa).

Belongs to the UreE family.

It localises to the cytoplasm. Involved in urease metallocenter assembly. Binds nickel. Probably functions as a nickel donor during metallocenter assembly. This Pseudomonas fluorescens (strain Pf0-1) protein is Urease accessory protein UreE.